We begin with the raw amino-acid sequence, 210 residues long: UPF0173 protein PF0020 (210 aa).

It belongs to the UPF0173 family.

In Pyrococcus furiosus (strain ATCC 43587 / DSM 3638 / JCM 8422 / Vc1), this protein is UPF0173 protein PF0020.